A 142-amino-acid chain; its full sequence is Baculoviral IAP repeat-containing protein 5 (142 aa).

A BIR repeat occupies 18–88; it reads RISTFKNWPF…KHSSGCAFLS (71 aa). Residue Ser-20 is modified to Phosphoserine; by AURKC. Lys-23 carries the N6-acetyllysine modification. Thr-34 is modified (phosphothreonine; by CDK1 and CDK15). The residue at position 48 (Thr-48) is a Phosphothreonine. Zn(2+) contacts are provided by Cys-57, Cys-60, His-77, and Cys-84. 4 positions are modified to N6-acetyllysine: Lys-90, Lys-110, Lys-112, and Lys-115. Thr-117 carries the post-translational modification Phosphothreonine; by AURKB. Lys-129 carries the N6-acetyllysine modification.

This sequence belongs to the IAP family. As to quaternary structure, monomer or homodimer. Exists as a homodimer in the apo state and as a monomer in the CPC-bound state. The monomer protects cells against apoptosis more efficiently than the dimer. Only the dimeric form is capable of enhancing tubulin stability in cells. When phosphorylated, interacts with LAMTOR5/HBXIP; the resulting complex binds pro-CASP9, as well as active CASP9, but much less efficiently. Component of the chromosomal passenger complex (CPC) composed of at least BIRC5/survivin, CDCA8/borealin, INCENP, AURKB or AURKC; in the complex forms a triple-helix bundle-based subcomplex with INCENP and CDCA8. Interacts with JTB. Interacts (via BIR domain) with histone H3 phosphorylated at 'Thr-3' (H3pT3). Interacts with EVI5. Interacts with GTP-bound RAN in both the S and M phases of the cell cycle. Interacts with USP9X. Interacts with tubulin. Interacts with BIRC2/c-IAP1. The acetylated form at Lys-129 interacts with STAT3. The monomeric form deacetylated at Lys-129 interacts with XPO1/CRM1. The monomeric form interacts with XIAP/BIRC4. Both the dimeric and monomeric form can interact with DIABLO/SMAC. Interacts with BIRC6/bruce. Interacts with FBXL7; this interaction facilitates the polyubiquitination and subsequent proteasomal degradation of BIRC5 by the SCF(FBXL7) E3 ubiquitin-protein ligase complex. Post-translationally, ubiquitinated by the Cul9-RING ubiquitin-protein ligase complex, leading to its degradation. Ubiquitination is required for centrosomal targeting. Deubiquitinated by USP35 or USP38; leading to stabilization. Acetylation at Lys-129 results in its homodimerization, while deacetylation promotes the formation of monomers which heterodimerize with XPO1/CRM1 which facilitates its nuclear export. The acetylated form represses STAT3 transactivation. The dynamic equilibrium between its acetylation and deacetylation at Lys-129 determines its interaction with XPO1/CRM1, its subsequent subcellular localization, and its ability to inhibit STAT3 transactivation. In terms of processing, in vitro phosphorylation at Thr-117 by AURKB prevents interaction with INCENP and localization to mitotic chromosomes. Phosphorylation at Thr-48 by CK2 is critical for its mitotic and anti-apoptotic activities. Phosphorylation at Thr-34 by CDK15 is critical for its anti-apoptotic activity. Phosphorylation at Ser-20 by AURKC is critical for regulation of proper chromosome alignment and segregation, and possibly cytokinesis.

The protein localises to the cytoplasm. The protein resides in the nucleus. Its subcellular location is the chromosome. It localises to the centromere. It is found in the cytoskeleton. The protein localises to the spindle. The protein resides in the kinetochore. Its subcellular location is the midbody. In terms of biological role, multitasking protein that has dual roles in promoting cell proliferation and preventing apoptosis. Component of a chromosome passage protein complex (CPC) which is essential for chromosome alignment and segregation during mitosis and cytokinesis. Acts as an important regulator of the localization of this complex; directs CPC movement to different locations from the inner centromere during prometaphase to midbody during cytokinesis and participates in the organization of the center spindle by associating with polymerized microtubules. Involved in the recruitment of CPC to centromeres during early mitosis via association with histone H3 phosphorylated at 'Thr-3' (H3pT3) during mitosis. The complex with RAN plays a role in mitotic spindle formation by serving as a physical scaffold to help deliver the RAN effector molecule TPX2 to microtubules. May counteract a default induction of apoptosis in G2/M phase. The acetylated form represses STAT3 transactivation of target gene promoters. May play a role in neoplasia. Inhibitor of CASP3 and CASP7. Essential for the maintenance of mitochondrial integrity and function. This chain is Baculoviral IAP repeat-containing protein 5 (BIRC5), found in Felis catus (Cat).